Reading from the N-terminus, the 149-residue chain is CyanoQ (149 aa).

The N-terminal stretch at 1–21 is a signal peptide; sequence MSRLRSLLSLILVLVTTVLVS. Residue Cys-22 is the site of N-palmitoyl cysteine attachment. The S-diacylglycerol cysteine moiety is linked to residue Cys-22.

The protein belongs to the PsbQ family. CyanoQ subfamily. PSII is composed of 1 copy each of membrane proteins PsbA, PsbB, PsbC, PsbD, PsbE, PsbF, PsbH, PsbI, PsbJ, PsbK, PsbL, PsbM, PsbT, PsbX, PsbY, PsbZ, Psb30/Ycf12, peripheral proteins PsbO, CyanoQ (PsbQ), PsbU, PsbV and a large number of cofactors. It forms dimeric complexes. Pull-down experiments with His-tagged PsbQ pull down dimeric, but not monomeric, PSII. The N-terminus is blocked. Upon expression in E.coli the N-terminus is modified with a diacylglycerol and an acyl group bound to two palmitates and one palmitoleate.

It is found in the cellular thylakoid membrane. Functionally, one of the extrinsic, lumenal subunits of photosystem II (PSII), which stabilize and protect the oxygen-evolving complex. PSII is a light-driven water plastoquinone oxidoreductase, using light energy to abstract electrons from H(2)O, generating a proton gradient subsequently used for ATP formation. Plays a role in the stability of the oxygen-evolving center on the luminal side of PSII. Required for optimal photoautotrophic growth in the absence of Ca(2+) or Cl(-), functions in optimizing PSII water oxidation/O(2) evolving activity. Requires PsbO to bind to PSII. The sequence is that of CyanoQ from Synechocystis sp. (strain ATCC 27184 / PCC 6803 / Kazusa).